Here is a 437-residue protein sequence, read N- to C-terminus: Enolase (437 aa).

Glutamine 162 is a binding site for (2R)-2-phosphoglycerate. Residue glutamate 204 is the Proton donor of the active site. Aspartate 251, glutamate 297, and aspartate 324 together coordinate Mg(2+). Positions 349, 378, 379, and 400 each coordinate (2R)-2-phosphoglycerate. Lysine 349 functions as the Proton acceptor in the catalytic mechanism.

It belongs to the enolase family. Requires Mg(2+) as cofactor.

The protein resides in the cytoplasm. It localises to the secreted. It is found in the cell surface. It carries out the reaction (2R)-2-phosphoglycerate = phosphoenolpyruvate + H2O. The protein operates within carbohydrate degradation; glycolysis; pyruvate from D-glyceraldehyde 3-phosphate: step 4/5. In terms of biological role, catalyzes the reversible conversion of 2-phosphoglycerate (2-PG) into phosphoenolpyruvate (PEP). It is essential for the degradation of carbohydrates via glycolysis. The chain is Enolase from Chlorobium chlorochromatii (strain CaD3).